Reading from the N-terminus, the 411-residue chain is Proline-responsive transcriptional activator PutR (411 aa).

Belongs to the CdaR family.

In terms of biological role, activates transcription of the putBCP operon. Requires proline as a coactivator. The sequence is that of Proline-responsive transcriptional activator PutR from Bacillus subtilis (strain 168).